Reading from the N-terminus, the 355-residue chain is Probable dual-specificity RNA methyltransferase RlmN 1 (355 aa).

Glu91 (proton acceptor) is an active-site residue. A Radical SAM core domain is found at 99–336 (RADRAAGCLS…THLRRSRGPD (238 aa)). Cys106 and Cys341 are oxidised to a cystine. [4Fe-4S] cluster-binding residues include Cys113, Cys117, and Cys120. S-adenosyl-L-methionine contacts are provided by residues 163-164 (GE), Ser195, 218-220 (SLH), and Asn294. Cys341 serves as the catalytic S-methylcysteine intermediate.

Belongs to the radical SAM superfamily. RlmN family. [4Fe-4S] cluster is required as a cofactor.

Its subcellular location is the cytoplasm. The enzyme catalyses adenosine(2503) in 23S rRNA + 2 reduced [2Fe-2S]-[ferredoxin] + 2 S-adenosyl-L-methionine = 2-methyladenosine(2503) in 23S rRNA + 5'-deoxyadenosine + L-methionine + 2 oxidized [2Fe-2S]-[ferredoxin] + S-adenosyl-L-homocysteine. It catalyses the reaction adenosine(37) in tRNA + 2 reduced [2Fe-2S]-[ferredoxin] + 2 S-adenosyl-L-methionine = 2-methyladenosine(37) in tRNA + 5'-deoxyadenosine + L-methionine + 2 oxidized [2Fe-2S]-[ferredoxin] + S-adenosyl-L-homocysteine. Its function is as follows. Specifically methylates position 2 of adenine 2503 in 23S rRNA and position 2 of adenine 37 in tRNAs. This is Probable dual-specificity RNA methyltransferase RlmN 1 from Opitutus terrae (strain DSM 11246 / JCM 15787 / PB90-1).